The sequence spans 116 residues: Small ribosomal subunit protein uS8c (116 aa).

This sequence belongs to the universal ribosomal protein uS8 family. As to quaternary structure, part of the 30S ribosomal subunit.

Its subcellular location is the plastid. The protein resides in the chloroplast. In terms of biological role, one of the primary rRNA binding proteins, it binds directly to 16S rRNA central domain where it helps coordinate assembly of the platform of the 30S subunit. The chain is Small ribosomal subunit protein uS8c (rps8) from Musa acuminata (Banana).